The sequence spans 844 residues: Rho guanine nucleotide exchange factor 33 (844 aa).

Basic and acidic residues-rich tracts occupy residues 1-13 and 101-113; these read MEKT…ENEH and QQKI…EKRR. Disordered regions lie at residues 1–20, 101–142, and 169–189; these read MEKT…NNPS, QQKI…GSPF, and AQES…MGPG. Residues 54–129 are a coiled coil; the sequence is LEEKVKSCRC…AKKTQKEEHS (76 aa). Over residues 130–142 the composition is skewed to polar residues; that stretch reads SQAGPAQAQGSPF. Positions 265–440 constitute a DH domain; that stretch reads KRQTVALELL…RVFISHYTLL (176 aa). Disordered regions lie at residues 498-541, 668-687, and 702-745; these read LQPY…DWEL, RPEH…AGSS, and AKPL…RAAQ. Arg-757 is modified (omega-N-methylarginine). The segment covering 787–800 has biased composition (basic and acidic residues); the sequence is DTTRFCPKEERESE. The segment at 787–844 is disordered; that stretch reads DTTRFCPKEERESEQTSFSDQNPRQDQKGGFRSSFRKLFKKKNGNATGEDFCGPWGWW. Over residues 820–829 the composition is skewed to basic residues; the sequence is SFRKLFKKKN.

In terms of biological role, may act as a guanine-nucleotide releasing factor. In Homo sapiens (Human), this protein is Rho guanine nucleotide exchange factor 33 (ARHGEF33).